Reading from the N-terminus, the 191-residue chain is Flavin reductase (NADH) (191 aa).

Residue 46 to 52 participates in FAD binding; the sequence is YGLTCSA. Ser-55 is a binding site for NAD(+). 72–73 is a binding site for FAD; sequence RV. Residues His-144 and 166 to 169 contribute to the NAD(+) site; that span reads YWRR.

Belongs to the non-flavoprotein flavin reductase family.

The catalysed reaction is a reduced flavin + NAD(+) = an oxidized flavin + NADH + 2 H(+). Catalyzes the reduction of flavin by NADH. Subsequently, the reduced flavins is transferred to the tetracycline 7-halogenase CtcP. The sequence is that of Flavin reductase (NADH) from Kitasatospora aureofaciens (Streptomyces aureofaciens).